The chain runs to 143 residues: Transcription antitermination protein NusB (143 aa).

It belongs to the NusB family.

Its function is as follows. Involved in transcription antitermination. Required for transcription of ribosomal RNA (rRNA) genes. Binds specifically to the boxA antiterminator sequence of the ribosomal RNA (rrn) operons. This is Transcription antitermination protein NusB from Clostridium botulinum (strain Kyoto / Type A2).